The following is a 326-amino-acid chain: Polycomb complex protein BMI-1 (326 aa).

The RING-type zinc finger occupies 18 to 57; it reads CVLCGGYFIDATTIIECLHSFCKTCIVRYLETSKYCPICD. The Nuclear localization signal signature appears at 81–95; the sequence is KLVPGLFKNEMKRRR. The interaction with PHC2 stretch occupies residues 162 to 182; sequence RYLRCPAAMTVMHLRKFLRSK. Residues 164–228 form an interaction with E4F1 region; sequence LRCPAAMTVM…GPLPLKYRVR (65 aa). Positions 236–326 are disordered; that stretch reads IGHQREGLSN…INGSSATSSG (91 aa). Over residues 265-278 the composition is skewed to low complexity; sequence LPSTSSCLPSPSTP. Residues 279–310 are compositionally biased toward polar residues; that stretch reads VQSPHPQFPHISSTMNGTSSSPGSNHQSSFTN. Low complexity predominate over residues 315 to 326; sequence SSINGSSATSSG.

In terms of assembly, component of a PRC1-like complex.

Its subcellular location is the nucleus. It localises to the cytoplasm. In terms of biological role, component of a Polycomb group (PcG) multiprotein PRC1-like complex, a complex class required to maintain the transcriptionally repressive state of many genes, including Hox genes, throughout development. PcG PRC1 complex acts via chromatin remodeling and modification of histones; it mediates monoubiquitination of histone H2A 'Lys-119', rendering chromatin heritably changed in its expressibility. In the PRC1-like complex, regulates the E3 ubiquitin-protein ligase activity of RNF2/RING2. This is Polycomb complex protein BMI-1 (BMI1) from Gallus gallus (Chicken).